The sequence spans 574 residues: Sulfate adenylyltransferase (574 aa).

Residues 1–169 form an N-terminal region; sequence MANPPHGGVL…IEAINKLNHY (169 aa). Positions 170-394 are catalytic; sequence DYVALRYTPA…LRESSPPRHT (225 aa). Residue Gln197 coordinates sulfate. Residues 197–200 and 291–294 contribute to the ATP site; these read QTRN and GRDH. Residues Thr198, Arg199, and Asn200 contribute to the active site. Sulfate is bound at residue Arg199. A sulfate-binding site is contributed by Ala295. Residue Val333 participates in ATP binding. Residues 395–574 form an allosteric regulation domain; adenylyl-sulfate kinase-like region; the sequence is QGFTIFLTGY…LETEGFFDRS (180 aa). 3'-phosphoadenylyl sulfate-binding positions include 434–437, Arg451, 477–478, and Arg516; these read DTVR and IA.

This sequence in the N-terminal section; belongs to the sulfate adenylyltransferase family. It in the C-terminal section; belongs to the APS kinase family. As to quaternary structure, homohexamer. Dimer of trimers.

The protein localises to the cytoplasm. The catalysed reaction is sulfate + ATP + H(+) = adenosine 5'-phosphosulfate + diphosphate. The protein operates within sulfur metabolism; hydrogen sulfide biosynthesis; sulfite from sulfate: step 1/3. Allosterically inhibited by 3'-phosphoadenosine 5'-phosphosulfate (PAPS). Functionally, catalyzes the first intracellular reaction of sulfate assimilation, forming adenosine-5'-phosphosulfate (APS) from inorganic sulfate and ATP. Plays an important role in sulfate activation as a component of the biosynthesis pathway of sulfur-containing amino acids. The polypeptide is Sulfate adenylyltransferase (Neosartorya fischeri (strain ATCC 1020 / DSM 3700 / CBS 544.65 / FGSC A1164 / JCM 1740 / NRRL 181 / WB 181) (Aspergillus fischerianus)).